A 383-amino-acid chain; its full sequence is MEAFPTEYFLGTAVRLLENVKYRDSNYTREERVENLQYAYNKAAAHFAQERQQQILKVSPKRLEASLRTIVGMVVYSWAKVSKELMADLSIHYTYTLILDDSEDDPHPQMLTYFDDLQSGNPQKHPWWMLVNEHFPNVLRHFGPFCSLNLIRSTLDFFEGCWIEQYNFHGFPGSFDYPGFLRRMNGLGHCVGGSLWPKENFNEQEHFLEITSAIAQMENWMVWVNDLMSFYKEFDDPRDQTSLVKNYVVSEGITLNQALEKLTQDTLQSSEQMMVVFSQKDPKIMDTIECFMHGYITWHLCDNRYRLKEIYDRTKDIQTEDAMKFRKFYEQAFKVGAIEATEWAYPTVVERLEQRKAEEQAERDEQAALANPEKAQVAQVVLA.

This sequence belongs to the trichodiene synthase family.

It catalyses the reaction (2E,6E)-farnesyl diphosphate = trichodiene + diphosphate. Its pathway is sesquiterpene biosynthesis; trichothecene biosynthesis. Functionally, TS is a member of the terpene cyclase group of enzymes. It catalyzes the isomerization and cyclization of farnesyl pyro-phosphate to form trichodiene, the first cyclic intermediate in the biosynthetic pathway for trichothecenes. It serves to branch trichothecene biosynthesis from the isoprenoid pathway. In Stachybotrys chartarum (Toxic black mold), this protein is Trichodiene synthase (TRI5).